We begin with the raw amino-acid sequence, 132 residues long: MTMTDPIADMLTRLRNANSAYHDSVTMPASKIKSHIAEILQQEGFITGWKTEDAEVGKNLTLELKFGPNRERSIAGIKRISKPGLRVYAKSTNLPKVLGGLGVAIISTSHGLLTDKQAGKKGVGGEVLAYVW.

It belongs to the universal ribosomal protein uS8 family. Part of the 30S ribosomal subunit. Contacts proteins S5 and S12.

Functionally, one of the primary rRNA binding proteins, it binds directly to 16S rRNA central domain where it helps coordinate assembly of the platform of the 30S subunit. The protein is Small ribosomal subunit protein uS8 of Streptomyces coelicolor (strain ATCC BAA-471 / A3(2) / M145).